Here is a 218-residue protein sequence, read N- to C-terminus: Small ribosomal subunit protein uS3 (218 aa).

The 69-residue stretch at 38–106 (IREFISKRLS…RVHINILEIK (69 aa)) folds into the KH type-2 domain.

The protein belongs to the universal ribosomal protein uS3 family. Part of the 30S ribosomal subunit. Forms a tight complex with proteins S10 and S14.

Binds the lower part of the 30S subunit head. Binds mRNA in the 70S ribosome, positioning it for translation. In Bacillus velezensis (strain DSM 23117 / BGSC 10A6 / LMG 26770 / FZB42) (Bacillus amyloliquefaciens subsp. plantarum), this protein is Small ribosomal subunit protein uS3.